Consider the following 735-residue polypeptide: Glutamine-dependent NAD(+) synthetase (735 aa).

The CN hydrolase domain occupies 4-274 (LRVATCNLNQ…VEVLDALVDL (271 aa)). The Proton acceptor; for glutaminase activity role is filled by Glu-44. Lys-113 functions as the For glutaminase activity in the catalytic mechanism. Cys-174 (nucleophile; for glutaminase activity) is an active-site residue. The segment at 324-711 (YHRPEEEIAF…STEGELRRRK (388 aa)) is ligase. 354-361 (PLSGGADS) contacts ATP. The active site involves Ser-356.

It in the C-terminal section; belongs to the NAD synthetase family.

The catalysed reaction is deamido-NAD(+) + L-glutamine + ATP + H2O = L-glutamate + AMP + diphosphate + NAD(+) + H(+). It participates in cofactor biosynthesis; NAD(+) biosynthesis; NAD(+) from deamido-NAD(+) (L-Gln route): step 1/1. The sequence is that of Glutamine-dependent NAD(+) synthetase from Oryza sativa subsp. indica (Rice).